Here is a 147-residue protein sequence, read N- to C-terminus: Cyanate hydratase (147 aa).

Catalysis depends on residues Arg-88, Glu-91, and Ser-114.

Belongs to the cyanase family.

It carries out the reaction cyanate + hydrogencarbonate + 3 H(+) = NH4(+) + 2 CO2. Its function is as follows. Catalyzes the reaction of cyanate with bicarbonate to produce ammonia and carbon dioxide. This Methylibium petroleiphilum (strain ATCC BAA-1232 / LMG 22953 / PM1) protein is Cyanate hydratase.